The sequence spans 328 residues: MELVVEPLNLHLNAETGSTLLDVLRSNEVPISYSCMSGRCGTCRCRVIAGHLRDNGPETGRPQAGKGTYVLACQAVLTEDCTIEIPESDEIVVHPARIVKGTVTAIDEATHDIRRLRIKLAKPLEFSPGQYATVQFTPECVRPYSMAGLPSDAEMEFQIRAVPGGHVSNYVFNELSVGASVRISGPLGTAYLRRTHTGPMLCVGGGTGLAPVLSIVRGALESGMSNPIHLYFGVRSEQDIYDEERLHALAARFPNLKVNVVVATGPAGPGRRSGLVTDLIGRDLPNLAGWRAYLCGAPAMVEALNLLVARLGIVPGHIHADAFYPSGV.

The 2Fe-2S ferredoxin-type domain occupies 1–89; that stretch reads MELVVEPLNL…DCTIEIPESD (89 aa). [2Fe-2S] cluster is bound by residues Cys35, Cys40, Cys43, and Cys73. In terms of domain architecture, FAD-binding FR-type spans 96 to 193; it reads ARIVKGTVTA…SGPLGTAYLR (98 aa).

It belongs to the bacterial ring-hydroxylating dioxygenase ferredoxin reductase family. In terms of assembly, ferredoxin reductase NagAa belongs to both the salicylate 5-hydroxylase (S5H) and the naphthalene 1,2-dioxygenase (NDO) multicomponent enzyme systems. The NDO multicomponent enzyme system is composed of an electron transfer component and a dioxygenase component (iron sulfur protein (ISP)). The electron transfer component is composed of a ferredoxin reductase (NagAa) and a ferredoxin (NagAb), and the dioxygenase component is formed by a large alpha subunit (NagAc) and a small beta subunit (NagAd). The S5H multicomponent enzyme system is composed of an electron transfer component and a monooxygenase component. The electron transfer component is comprised of a ferredoxin reductase (NagAa) and a ferredoxin (NagAb), and the monooxygenase component is formed by a large subunit (NagG) and a small subunit (NagH). The cofactor is [2Fe-2S] cluster. FAD is required as a cofactor.

The enzyme catalyses 2 reduced [2Fe-2S]-[ferredoxin] + NAD(+) + H(+) = 2 oxidized [2Fe-2S]-[ferredoxin] + NADH. It catalyses the reaction 2 reduced [2Fe-2S]-[ferredoxin] + NADP(+) + H(+) = 2 oxidized [2Fe-2S]-[ferredoxin] + NADPH. It functions in the pathway aromatic compound metabolism; naphthalene degradation. Its function is as follows. Component of two multicomponent enzyme systems which are involved in the catabolism of naphthalene. Plays a role as an electron transfer component for both salicylate 5-hydroxylase (S5H) and naphthalene 1,2-dioxygenase (NDO) systems, by transferring electrons from NAD(P)H to the oxygenase component via the ferredoxin NagAb. The electron transport chain from the two systems can use both NADH and NADPH as electron donors at approximately similar rates. This chain is Naphthalene 1,2-dioxygenase/salicylate 5-hydroxylase systems, ferredoxin--NAD(P)(+), reductase component, found in Ralstonia sp.